The following is a 449-amino-acid chain: Na(+)/H(+) antiporter NhaA (449 aa).

The next 12 helical transmembrane spans lie at 30-50, 69-89, 112-132, 138-158, 168-188, 192-212, 218-238, 241-261, 312-332, 348-368, 386-406, and 419-439; these read IFLI…WAGA, FGLT…FLVA, LLAA…LNLG, GWGI…GLLG, FLIA…ALFY, LSWI…LMNW, LIWY…SGIH, IAGV…SKIL, SLVD…NAGV, LGIL…FTLI, IIGI…ITNL, and ISIL…LLLT.

Belongs to the NhaA Na(+)/H(+) (TC 2.A.33) antiporter family.

The protein localises to the cell inner membrane. It catalyses the reaction Na(+)(in) + 2 H(+)(out) = Na(+)(out) + 2 H(+)(in). In terms of biological role, na(+)/H(+) antiporter that extrudes sodium in exchange for external protons. In Christiangramia forsetii (strain DSM 17595 / CGMCC 1.15422 / KT0803) (Gramella forsetii), this protein is Na(+)/H(+) antiporter NhaA.